The sequence spans 709 residues: Phosphoribosylformylglycinamidine synthase subunit PurL (709 aa).

The active site involves H36. ATP is bound by residues Y39 and K80. A Mg(2+)-binding site is contributed by E82. Substrate-binding positions include 83–86 (SHNH) and R105. Residue H84 is the Proton acceptor of the active site. Residue D106 coordinates Mg(2+). Q226 lines the substrate pocket. D252 contacts Mg(2+). A substrate-binding site is contributed by 294–296 (ETQ). Residues D470 and G507 each coordinate ATP. S510 contacts substrate.

Belongs to the FGAMS family. In terms of assembly, monomer. Part of the FGAM synthase complex composed of 1 PurL, 1 PurQ and 2 PurS subunits.

The protein resides in the cytoplasm. The catalysed reaction is N(2)-formyl-N(1)-(5-phospho-beta-D-ribosyl)glycinamide + L-glutamine + ATP + H2O = 2-formamido-N(1)-(5-O-phospho-beta-D-ribosyl)acetamidine + L-glutamate + ADP + phosphate + H(+). The protein operates within purine metabolism; IMP biosynthesis via de novo pathway; 5-amino-1-(5-phospho-D-ribosyl)imidazole from N(2)-formyl-N(1)-(5-phospho-D-ribosyl)glycinamide: step 1/2. Its function is as follows. Part of the phosphoribosylformylglycinamidine synthase complex involved in the purines biosynthetic pathway. Catalyzes the ATP-dependent conversion of formylglycinamide ribonucleotide (FGAR) and glutamine to yield formylglycinamidine ribonucleotide (FGAM) and glutamate. The FGAM synthase complex is composed of three subunits. PurQ produces an ammonia molecule by converting glutamine to glutamate. PurL transfers the ammonia molecule to FGAR to form FGAM in an ATP-dependent manner. PurS interacts with PurQ and PurL and is thought to assist in the transfer of the ammonia molecule from PurQ to PurL. This chain is Phosphoribosylformylglycinamidine synthase subunit PurL, found in Saccharolobus islandicus (strain M.16.27) (Sulfolobus islandicus).